The following is a 37-amino-acid chain: Large ribosomal subunit protein bL36 (37 aa).

The protein belongs to the bacterial ribosomal protein bL36 family.

This Borreliella burgdorferi (strain ATCC 35210 / DSM 4680 / CIP 102532 / B31) (Borrelia burgdorferi) protein is Large ribosomal subunit protein bL36.